The sequence spans 331 residues: Gem-associated protein 2 (331 aa).

Disordered stretches follow at residues 1-23 (MDEF…NEPL), 101-130 (SNRP…LIPQ), and 151-222 (NNNN…TKKP). Residues 11–21 (VGEEIEPDDNE) show a composition bias toward acidic residues. Low complexity predominate over residues 106-126 (NNNNNNNNNNNNNNNNNNNNN). Over residues 165–215 (DNQEDDDDDENNEDYEYNENKEEEEEEEEEEEEEEEVEEEEEEEEEEEEVV) the composition is skewed to acidic residues. The stretch at 173 to 224 (DENNEDYEYNENKEEEEEEEEEEEEEEEVEEEEEEEEEEEEVVDYSTKKPTL) forms a coiled coil.

This sequence belongs to the gemin-2 family.

It localises to the nucleus. Its subcellular location is the gem. It is found in the cytoplasm. Its function is as follows. The SMN complex catalyzes the assembly of small nuclear ribonucleoproteins (snRNPs), the building blocks of the spliceosome, and thereby plays an important role in the splicing of cellular pre-mRNAs. Most spliceosomal snRNPs contain a common set of Sm proteins SNRPB, SNRPD1, SNRPD2, SNRPD3, SNRPE, SNRPF and SNRPG that assemble in a heptameric protein ring on the Sm site of the small nuclear RNA to form the core snRNP (Sm core). In the cytosol, the Sm proteins SNRPD1, SNRPD2, SNRPE, SNRPF and SNRPG (5Sm) are trapped in an inactive 6S pICln-Sm complex by the chaperone CLNS1A that controls the assembly of the core snRNP. To assemble core snRNPs, the SMN complex accepts the trapped 5Sm proteins from CLNS1A. Binding of snRNA inside 5Sm ultimately triggers eviction of the SMN complex, thereby allowing binding of SNRPD3 and SNRPB to complete assembly of the core snRNP. Within the SMN complex, GEMIN2 constrains the conformation of 5Sm, thereby promoting 5Sm binding to snRNA containing the snRNP code (a nonameric Sm site and a 3'-adjacent stem-loop), thus preventing progression of assembly until a cognate substrate is bound. In terms of biological role, may play an essential role in spliceosomal snRNP assembly in the cytoplasm and may be required for pre-mRNA splicing in the nucleus. This Dictyostelium discoideum (Social amoeba) protein is Gem-associated protein 2 (gemin2).